The primary structure comprises 100 residues: uncharacterized protein (100 aa).

2 consecutive transmembrane segments (helical) span residues 50–70 and 75–95; these read LLIFAVGFPWSKLVLASFSLF and DVFLIVAIVSLFLISSASPEV.

Its subcellular location is the membrane. This is an uncharacterized protein from Saccharomyces cerevisiae (strain ATCC 204508 / S288c) (Baker's yeast).